A 147-amino-acid chain; its full sequence is Acidic phospholipase A2 beta-bungarotoxin A3 chain (147 aa).

A signal peptide spans Met1–Ala19. Positions Ala20–Leu27 are excised as a propeptide. 6 cysteine pairs are disulfide-bonded: Cys54/Cys146, Cys56/Cys72, Cys71/Cys127, Cys78/Cys120, Cys88/Cys113, and Cys106/Cys118. Tyr55, Gly57, and Gly59 together coordinate Ca(2+). His75 is an active-site residue. A Ca(2+)-binding site is contributed by Asp76. The active site involves Asp121.

The protein belongs to the phospholipase A2 family. Group I subfamily. D49 sub-subfamily. In terms of assembly, heterodimer; disulfide-linked. The A chains have phospholipase A2 activity and the B chains show homology with the basic protease inhibitors. The A3 chain is found in beta-5 bungarotoxins. Requires Ca(2+) as cofactor. Expressed by the venom gland.

It is found in the secreted. It carries out the reaction a 1,2-diacyl-sn-glycero-3-phosphocholine + H2O = a 1-acyl-sn-glycero-3-phosphocholine + a fatty acid + H(+). Functionally, snake venom phospholipase A2 (PLA2) that inhibits neuromuscular transmission by blocking acetylcholine release from the nerve termini. PLA2 catalyzes the calcium-dependent hydrolysis of the 2-acyl groups in 3-sn-phosphoglycerides. This chain is Acidic phospholipase A2 beta-bungarotoxin A3 chain, found in Bungarus multicinctus (Many-banded krait).